We begin with the raw amino-acid sequence, 169 residues long: Ureidoglycolate lyase (169 aa).

Belongs to the ureidoglycolate lyase family. In terms of assembly, homodimer. It depends on Ni(2+) as a cofactor.

It carries out the reaction (S)-ureidoglycolate = urea + glyoxylate. It functions in the pathway nitrogen metabolism; (S)-allantoin degradation. In terms of biological role, catalyzes the catabolism of the allantoin degradation intermediate (S)-ureidoglycolate, generating urea and glyoxylate. Involved in the utilization of allantoin as nitrogen source. The chain is Ureidoglycolate lyase from Brucella ovis (strain ATCC 25840 / 63/290 / NCTC 10512).